A 578-amino-acid chain; its full sequence is Alpha-(1,6)-fucosyltransferase (578 aa).

Residues Met1–Arg9 lie on the Cytoplasmic side of the membrane. A helical; Signal-anchor for type II membrane protein transmembrane segment spans residues Trp10–Val30. Residues Arg31 to Lys578 lie on the Lumenal side of the membrane. Cystine bridges form between Cys207–Cys269, Cys215–Cys233, and Cys221–Cys225. In terms of domain architecture, GT23 spans Lys209–Leu496. The SH3-binding motif lies at Pro302–Pro308. Positions Arg368–Arg369 are important for donor substrate binding. A disulfide bond links Cys468 and Cys475. Positions Gln505–Glu566 constitute an SH3 domain.

It belongs to the glycosyltransferase 23 family.

Its subcellular location is the golgi apparatus. It localises to the golgi stack membrane. It catalyses the reaction N(4)-{beta-D-GlcNAc-(1-&gt;2)-alpha-D-Man-(1-&gt;3)-[beta-D-GlcNAc-(1-&gt;2)-alpha-D-Man-(1-&gt;6)]-beta-D-Man-(1-&gt;4)-beta-D-GlcNAc-(1-&gt;4)-beta-D-GlcNAc}-L-asparaginyl-[protein] + GDP-beta-L-fucose = an N(4)-{beta-D-GlcNAc-(1-&gt;2)-alpha-D-Man-(1-&gt;3)-[beta-D-GlcNAc-(1-&gt;2)-alpha-D-Man-(1-&gt;6)]-beta-D-Man-(1-&gt;4)-beta-D-GlcNAc-(1-&gt;4)-[alpha-L-Fuc-(1-&gt;6)]-beta-D-GlcNAc}-L-asparaginyl-[protein] + GDP + H(+). It functions in the pathway protein modification; protein glycosylation. In terms of biological role, catalyzes the addition of fucose in alpha 1-6 linkage to the first GlcNAc residue, next to the peptide chains in N-glycans. This is Alpha-(1,6)-fucosyltransferase (fut8) from Xenopus tropicalis (Western clawed frog).